Here is a 1171-residue protein sequence, read N- to C-terminus: APC-related protein 1 (1171 aa).

The interval 1-54 (MSSSSSDENETTIHSSSNPGSSGIYSQLKAGSSKRPSVRHDVSDAEDDEEPYEG) is disordered. A required for interaction with bar-1 and hmp-2 region spans residues 1–481 (MSSSSSDENE…LSLRATRASP (481 aa)). Residues 15 to 26 (SSSNPGSSGIYS) show a composition bias toward low complexity. The ARM repeat unit spans residues 312–356 (NCLKVLANILSPDARFTTLVDSASGILKYVSQYLATNSSHLELRS). Disordered stretches follow at residues 587–617 (PVDDDLDIPTSTVMGTRSNSERSLGSMNPGS), 662–699 (HPEDNQMTTPPNHPSTQNTTHYSSGSANTMTRSDGTTV), 720–741 (RKTSEDLESPDDILPGPSLEVE), 767–822 (EEMP…EMTT), 837–936 (PRSR…TMRI), and 995–1030 (SSGSGSSLQKAETTAGSRDSGALATSTPIGSVSSLP). The interval 591–1171 (DLDIPTSTVM…NPKQMLVTIV (581 aa)) is required for interaction with pry-1. 2 stretches are compositionally biased toward polar residues: residues 595-617 (PTSTVMGTRSNSERSLGSMNPGS) and 666-697 (NQMTTPPNHPSTQNTTHYSSGSANTMTRSDGT). Over residues 788–799 (FSPSQKTTSSPA) the composition is skewed to polar residues. A compositionally biased stretch (basic and acidic residues) spans 857–874 (EPDRSSHSKNEEADRRDA). Composition is skewed to polar residues over residues 890 to 913 (RGSSPQQQQLHRMESLESQASSED) and 1002 to 1028 (LQKAETTAGSRDSGALATSTPIGSVSS).

This sequence belongs to the adenomatous polyposis coli (APC) family. As to quaternary structure, interacts (via N-terminus) with bar-1 and hmp-2; the interaction with hmp-2 is relatively weak. Interacts (via C-terminus) with pry-1 (via N-terminus). Probably associates with bar-1, gsk-3, pry-1 in a complex.

The protein resides in the cell junction. It is found in the adherens junction. Its subcellular location is the cytoplasm. The protein localises to the nucleus. In terms of biological role, has a role in endoderm cell specification and pharyngeal development. Required for the migration of epithelial cells, organization of the anterior seam cells and ceh-13 expression during embryo morphogenesis. Prevents hyperactivation of the Wnt signaling pathway during endoderm development, probably by preventing hmp-2 nuclear translocation. During larval development, apr-1 is required for expression of lin-39 in P3-8.p. Shown to negatively regulate Wnt signaling in vulval precursor cells. Has a role in cell division by establishing the polarity of the mother cell which forms the asymmetries of the daughter nuclei. Thought to regulate export of wrm-1 from the nucleus possibly as part of a complex involving pry-1. The chain is APC-related protein 1 from Caenorhabditis briggsae.